The chain runs to 159 residues: Large ribosomal subunit protein uL22 (159 aa).

The disordered stretch occupies residues 129–159; it reads VEGQQKAKMARQKAVTSVVKAPSKTQGGVQK.

Belongs to the universal ribosomal protein uL22 family. As to quaternary structure, part of the 50S ribosomal subunit.

Functionally, this protein binds specifically to 23S rRNA; its binding is stimulated by other ribosomal proteins, e.g. L4, L17, and L20. It is important during the early stages of 50S assembly. It makes multiple contacts with different domains of the 23S rRNA in the assembled 50S subunit and ribosome. In terms of biological role, the globular domain of the protein is located near the polypeptide exit tunnel on the outside of the subunit, while an extended beta-hairpin is found that lines the wall of the exit tunnel in the center of the 70S ribosome. The protein is Large ribosomal subunit protein uL22 (rplV) of Mycoplasma pneumoniae (strain ATCC 29342 / M129 / Subtype 1) (Mycoplasmoides pneumoniae).